We begin with the raw amino-acid sequence, 316 residues long: tRNA(Ile)-lysidine synthase (316 aa).

33–38 (SGGTDS) contributes to the ATP binding site.

This sequence belongs to the tRNA(Ile)-lysidine synthase family.

It is found in the cytoplasm. It catalyses the reaction cytidine(34) in tRNA(Ile2) + L-lysine + ATP = lysidine(34) in tRNA(Ile2) + AMP + diphosphate + H(+). In terms of biological role, ligates lysine onto the cytidine present at position 34 of the AUA codon-specific tRNA(Ile) that contains the anticodon CAU, in an ATP-dependent manner. Cytidine is converted to lysidine, thus changing the amino acid specificity of the tRNA from methionine to isoleucine. The polypeptide is tRNA(Ile)-lysidine synthase (Bdellovibrio bacteriovorus (strain ATCC 15356 / DSM 50701 / NCIMB 9529 / HD100)).